Here is an 87-residue protein sequence, read N- to C-terminus: UPF0250 protein KPN78578_06520 (87 aa).

The protein belongs to the UPF0250 family.

In Klebsiella pneumoniae subsp. pneumoniae (strain ATCC 700721 / MGH 78578), this protein is UPF0250 protein KPN78578_06520.